The chain runs to 120 residues: NADH dehydrogenase [ubiquinone] 1 subunit C2 (120 aa).

A helical membrane pass occupies residues 57 to 76; that stretch reads GLHRQLLFVTSFVFAGYFYL.

The protein belongs to the complex I NDUFC2 subunit family. As to quaternary structure, complex I is composed of 45 different subunits. Interacts with TMEM242.

The protein localises to the mitochondrion inner membrane. Its function is as follows. Accessory subunit of the mitochondrial membrane respiratory chain NADH dehydrogenase (Complex I), that is believed not to be involved in catalysis but required for the complex assembly. Complex I functions in the transfer of electrons from NADH to the respiratory chain. The immediate electron acceptor for the enzyme is believed to be ubiquinone. The sequence is that of NADH dehydrogenase [ubiquinone] 1 subunit C2 from Mus musculus (Mouse).